The following is a 557-amino-acid chain: Formate--tetrahydrofolate ligase 2 (557 aa).

ATP is bound at residue 66-73 (TPAGEGKT).

Belongs to the formate--tetrahydrofolate ligase family.

The catalysed reaction is (6S)-5,6,7,8-tetrahydrofolate + formate + ATP = (6R)-10-formyltetrahydrofolate + ADP + phosphate. It participates in one-carbon metabolism; tetrahydrofolate interconversion. The polypeptide is Formate--tetrahydrofolate ligase 2 (Streptococcus pyogenes serotype M6 (strain ATCC BAA-946 / MGAS10394)).